A 197-amino-acid polypeptide reads, in one-letter code: uncharacterized protein (197 aa).

Transmembrane regions (helical) follow at residues 11-31, 85-105, 109-129, and 174-194; these read IALI…ISAS, STFM…SIFV, AVVV…VVLF, and VGTG…YPFI.

The protein localises to the cell membrane. This is an uncharacterized protein from Methanocaldococcus jannaschii (strain ATCC 43067 / DSM 2661 / JAL-1 / JCM 10045 / NBRC 100440) (Methanococcus jannaschii).